The following is a 368-amino-acid chain: 3-dehydroquinate synthase (368 aa).

Residues 131–132 (TT), Lys-144, and Lys-153 contribute to the NAD(+) site. The Zn(2+) site is built by Glu-186, His-249, and His-267.

The protein belongs to the sugar phosphate cyclases superfamily. Dehydroquinate synthase family. It depends on Co(2+) as a cofactor. The cofactor is Zn(2+). Requires NAD(+) as cofactor.

It localises to the cytoplasm. It catalyses the reaction 7-phospho-2-dehydro-3-deoxy-D-arabino-heptonate = 3-dehydroquinate + phosphate. It functions in the pathway metabolic intermediate biosynthesis; chorismate biosynthesis; chorismate from D-erythrose 4-phosphate and phosphoenolpyruvate: step 2/7. Catalyzes the conversion of 3-deoxy-D-arabino-heptulosonate 7-phosphate (DAHP) to dehydroquinate (DHQ). This Pelagibacter ubique (strain HTCC1062) protein is 3-dehydroquinate synthase.